Consider the following 695-residue polypeptide: ATP-dependent DNA helicase II subunit 2 (695 aa).

Residues 229-461 form the Ku domain; sequence FSIGNRDSKD…IDFAVSNYID (233 aa).

It belongs to the ku80 family. In terms of assembly, heterodimer of pku70 and pku80.

The protein resides in the nucleus. The protein localises to the chromosome. Its subcellular location is the telomere. The enzyme catalyses ATP + H2O = ADP + phosphate + H(+). Functionally, single-stranded DNA-dependent ATP-dependent helicase. Involved in non-homologous end joining (NHEJ) DNA double strand break repair. DNA-binding is sequence-independent but has a high affinity to nicks in double-stranded DNA and to the ends of duplex DNA. Binds to naturally occurring chromosomal ends, and therefore provides chromosomal end protection. Required also for telomere recombination to repair telomeric ends in the absence of telomerase. ku70, of the ku70/ku80 heterodimer, binds to the stem loop of tlc1, the RNA component of telomerase. Involved in telomere maintenance. Interacts with telomeric repeats and subtelomeric sequences thereby controlling telomere length and protecting against subtelomeric rearrangement. Required for mating-type switching. The protein is ATP-dependent DNA helicase II subunit 2 (pku80) of Schizosaccharomyces pombe (strain 972 / ATCC 24843) (Fission yeast).